Consider the following 950-residue polypeptide: Glycine dehydrogenase (decarboxylating) (950 aa).

Lys-698 is modified (N6-(pyridoxal phosphate)lysine).

The protein belongs to the GcvP family. The glycine cleavage system is composed of four proteins: P, T, L and H. Requires pyridoxal 5'-phosphate as cofactor.

The enzyme catalyses N(6)-[(R)-lipoyl]-L-lysyl-[glycine-cleavage complex H protein] + glycine + H(+) = N(6)-[(R)-S(8)-aminomethyldihydrolipoyl]-L-lysyl-[glycine-cleavage complex H protein] + CO2. Functionally, the glycine cleavage system catalyzes the degradation of glycine. The P protein binds the alpha-amino group of glycine through its pyridoxal phosphate cofactor; CO(2) is released and the remaining methylamine moiety is then transferred to the lipoamide cofactor of the H protein. This chain is Glycine dehydrogenase (decarboxylating), found in Neisseria meningitidis serogroup C (strain 053442).